Consider the following 177-residue polypeptide: Acetyltransferase (177 aa).

Residues 4-174 (AQLRRVTAES…PTAIYFKTLG (171 aa)) enclose the N-acetyltransferase domain. Acetyl-CoA is bound by residues Glu-27, 96–98 (LMV), 104–109 (GRGLGR), 130–131 (DT), and Tyr-141.

Its function is as follows. Renders tabtoxin-producing pathogens tolerant to their own phytotoxins. This Pseudomonas amygdali pv. tabaci (Pseudomonas syringae pv. tabaci) protein is Acetyltransferase (ttr).